The following is a 226-amino-acid chain: UPF0758 protein SE_1336 (226 aa).

The 123-residue stretch at 102–224 (QITHPSDVAS…FTSLVEAGYF (123 aa)) folds into the MPN domain. Zn(2+) contacts are provided by H173, H175, and D186. Positions 173–186 (HNHPSGDVTPSKED) match the JAMM motif motif.

The protein belongs to the UPF0758 family.

The polypeptide is UPF0758 protein SE_1336 (Staphylococcus epidermidis (strain ATCC 12228 / FDA PCI 1200)).